Reading from the N-terminus, the 458-residue chain is Bifunctional protein GlmU (458 aa).

A pyrophosphorylase region spans residues 1–230 (MENRYAIILA…FDEAMGVNDR (230 aa)). UDP-N-acetyl-alpha-D-glucosamine is bound by residues 9-12 (LAAG), Lys23, Gln73, and 78-79 (GT). Asp103 is a Mg(2+) binding site. The UDP-N-acetyl-alpha-D-glucosamine site is built by Gly140, Glu155, Asn170, and Asn228. Residue Asn228 coordinates Mg(2+). The segment at 231–251 (VALSTANKIMHRRLNEMHMRN) is linker. Residues 252–458 (GVTFIDPDTT…YAKKLPYMKD (207 aa)) are N-acetyltransferase. UDP-N-acetyl-alpha-D-glucosamine is bound by residues Arg333 and Lys351. His363 serves as the catalytic Proton acceptor. UDP-N-acetyl-alpha-D-glucosamine is bound by residues Tyr366 and Asn377. Acetyl-CoA contacts are provided by residues 386–387 (NY), Ser405, Ala423, and Arg440.

In the N-terminal section; belongs to the N-acetylglucosamine-1-phosphate uridyltransferase family. This sequence in the C-terminal section; belongs to the transferase hexapeptide repeat family. As to quaternary structure, homotrimer. It depends on Mg(2+) as a cofactor.

The protein localises to the cytoplasm. It catalyses the reaction alpha-D-glucosamine 1-phosphate + acetyl-CoA = N-acetyl-alpha-D-glucosamine 1-phosphate + CoA + H(+). The enzyme catalyses N-acetyl-alpha-D-glucosamine 1-phosphate + UTP + H(+) = UDP-N-acetyl-alpha-D-glucosamine + diphosphate. Its pathway is nucleotide-sugar biosynthesis; UDP-N-acetyl-alpha-D-glucosamine biosynthesis; N-acetyl-alpha-D-glucosamine 1-phosphate from alpha-D-glucosamine 6-phosphate (route II): step 2/2. The protein operates within nucleotide-sugar biosynthesis; UDP-N-acetyl-alpha-D-glucosamine biosynthesis; UDP-N-acetyl-alpha-D-glucosamine from N-acetyl-alpha-D-glucosamine 1-phosphate: step 1/1. It functions in the pathway bacterial outer membrane biogenesis; LPS lipid A biosynthesis. Its function is as follows. Catalyzes the last two sequential reactions in the de novo biosynthetic pathway for UDP-N-acetylglucosamine (UDP-GlcNAc). The C-terminal domain catalyzes the transfer of acetyl group from acetyl coenzyme A to glucosamine-1-phosphate (GlcN-1-P) to produce N-acetylglucosamine-1-phosphate (GlcNAc-1-P), which is converted into UDP-GlcNAc by the transfer of uridine 5-monophosphate (from uridine 5-triphosphate), a reaction catalyzed by the N-terminal domain. The polypeptide is Bifunctional protein GlmU (Enterococcus faecalis (strain ATCC 700802 / V583)).